The following is a 155-amino-acid chain: Transcriptional repressor NrdR (155 aa).

The tract at residues 1-22 is disordered; sequence MRCPFCGHDETQVKDSRPSEDG. A zinc finger lies at 3–34; sequence CPFCGHDETQVKDSRPSEDGAAIRRRRLCPQC. Residues 7–22 are compositionally biased toward basic and acidic residues; it reads GHDETQVKDSRPSEDG. The region spanning 49 to 139 is the ATP-cone domain; the sequence is ITILKRSGRR…VYRDFRETQD (91 aa).

It belongs to the NrdR family. The cofactor is Zn(2+).

Negatively regulates transcription of bacterial ribonucleotide reductase nrd genes and operons by binding to NrdR-boxes. This Phenylobacterium zucineum (strain HLK1) protein is Transcriptional repressor NrdR.